We begin with the raw amino-acid sequence, 135 residues long: Galectin-1 (135 aa).

A2 is subject to N-acetylalanine. The Galectin domain occupies 4-135 (GLVASNLNLK…DFKIKCVAFD (132 aa)). Residues K13 and K29 each carry the N6-acetyllysine modification. At S30 the chain carries Phosphoserine; by FAM20C. A beta-D-galactoside contacts are provided by residues 45 to 49 (HFNPR), H53, N62, and 69 to 72 (WGTE). At K108 the chain carries N6-acetyllysine; alternate. K108 bears the N6-succinyllysine; alternate mark. K128 bears the N6-acetyllysine mark.

In terms of assembly, homodimer. Binds LGALS3BP. Interacts with CD2, CD3, CD4, CD6, CD7, CD43, ALCAM and CD45. Interacts with laminin (via poly-N-acetyllactosamine). Interacts with SUSD2. Interacts with cargo receptor TMED10; the interaction mediates the translocation from the cytoplasm into the ERGIC (endoplasmic reticulum-Golgi intermediate compartment) and thereby secretion. Interacts with CD69. In terms of tissue distribution, expressed in placenta, maternal decidua and fetal membranes. Within placenta, expressed in trophoblasts, stromal cells, villous endothelium, syncytiotrophoblast apical membrane and villous stroma. Within fetal membranes, expressed in amnion, chorioamniotic mesenchyma and chorion (at protein level). Expressed in cardiac, smooth, and skeletal muscle, neurons, thymus, kidney and hematopoietic cells.

Its subcellular location is the secreted. The protein localises to the extracellular space. The protein resides in the extracellular matrix. It localises to the cytoplasm. Lectin that binds beta-galactoside and a wide array of complex carbohydrates. Plays a role in regulating apoptosis, cell proliferation and cell differentiation. Inhibits CD45 protein phosphatase activity and therefore the dephosphorylation of Lyn kinase. Strong inducer of T-cell apoptosis. Plays a negative role in Th17 cell differentiation via activation of the receptor CD69. The chain is Galectin-1 from Homo sapiens (Human).